Consider the following 498-residue polypeptide: ATP synthase subunit beta, chloroplastic (498 aa).

172 to 179 contacts ATP; it reads GGAGVGKT.

It belongs to the ATPase alpha/beta chains family. F-type ATPases have 2 components, CF(1) - the catalytic core - and CF(0) - the membrane proton channel. CF(1) has five subunits: alpha(3), beta(3), gamma(1), delta(1), epsilon(1). CF(0) has four main subunits: a(1), b(1), b'(1) and c(9-12).

The protein resides in the plastid. It localises to the chloroplast thylakoid membrane. The catalysed reaction is ATP + H2O + 4 H(+)(in) = ADP + phosphate + 5 H(+)(out). Functionally, produces ATP from ADP in the presence of a proton gradient across the membrane. The catalytic sites are hosted primarily by the beta subunits. In Phoenix dactylifera (Date palm), this protein is ATP synthase subunit beta, chloroplastic.